The chain runs to 131 residues: uncharacterized protein (131 aa).

The segment at 15 to 43 is disordered; that stretch reads QLQAEHGSAPSNIASGPSSNQQQQEVQDE. The segment covering 23–34 has biased composition (polar residues); that stretch reads APSNIASGPSSN.

Belongs to the PDCD5 family.

This is an uncharacterized protein from Schizosaccharomyces pombe (strain 972 / ATCC 24843) (Fission yeast).